A 706-amino-acid chain; its full sequence is Gamma-adducin (706 aa).

The span at 1 to 10 (MSSDASQGVI) shows a compositional bias: polar residues. A disordered region spans residues 1–20 (MSSDASQGVITTPPPPSMPH). At serine 2 the chain carries N-acetylserine. Phosphoserine occurs at positions 42, 64, 402, 414, 423, 442, and 461. Disordered regions lie at residues 471-497 (AEDS…LNTN), 535-555 (PSTM…NPFS), 575-610 (GLED…KLEE), and 666-706 (EKIE…KVEA). A Glycyl lysine isopeptide (Lys-Gly) (interchain with G-Cter in SUMO2) cross-link involves residue lysine 484. Phosphoserine is present on residues serine 585, serine 590, serine 673, serine 677, serine 679, serine 681, and serine 683. Over residues 589 to 602 (SSVSQIQSQTQSPQ) the composition is skewed to low complexity. The span at 682-706 (PSKKKKKFRTPSFLKKNKKKEKVEA) shows a compositional bias: basic residues. The segment at 684–701 (KKKKKFRTPSFLKKNKKK) is interaction with calmodulin.

This sequence belongs to the aldolase class II family. Adducin subfamily. Heterodimer of an alpha and a gamma subunit. Post-translationally, sumoylated. In terms of processing, proteolytically cleaved by asparagine endopeptidase (AEP) into 2 fragments. Overexpression of the 1-357 fragment induces neuronal apoptosis, and overexpression of either 1-357 or 358-706 fragment increases the degeneration of dendritic spines. Overexpression of the 1-357 fragment impairs neurite outgrowth by downregulating the expression of Rac2, and induces synaptic dysfunction and cognitive impairments in tau P301S transgenic mice, a mouse model for Alzheimer disease (AD). As to expression, ubiquitously expressed. Cleavage fragment 1-357 is abundantly expressed in the brain of patients with Alzheimer disease (AD), but hardly detectable in age-matched control individuals (at protein level).

It localises to the cytoplasm. Its subcellular location is the cytoskeleton. The protein localises to the cell membrane. Functionally, membrane-cytoskeleton-associated protein that promotes the assembly of the spectrin-actin network. Plays a role in actin filament capping. Binds to calmodulin. Involved in myogenic reactivity of the renal afferent arteriole (Af-art), renal interlobular arteries and middle cerebral artery (MCA) to increased perfusion pressure. Involved in regulation of potassium channels in the vascular smooth muscle cells (VSMCs) of the Af-art and MCA ex vivo. Involved in regulation of glomerular capillary pressure, glomerular filtration rate (GFR) and glomerular nephrin expression in response to hypertension. Involved in renal blood flow (RBF) autoregulation. Plays a role in podocyte structure and function. Regulates globular monomer actin (G-actin) and filamentous polymer actin (F-actin) ratios in the primary podocytes affecting actin cytoskeleton organization. Regulates expression of synaptopodin, RhoA, Rac1 and CDC42 in the renal cortex and the primary podocytes. Regulates expression of nephrin in the glomeruli and in the primary podocytes, expression of nephrin and podocinin in the renal cortex, and expression of focal adhesion proteins integrin alpha-3 and integrin beta-1 in the glomeruli. Involved in cell migration and cell adhesion of podocytes, and in podocyte foot process effacement. Regulates expression of profibrotics markers MMP2, MMP9, TGF beta-1, tubular tight junction protein E-cadherin, and mesenchymal markers vimentin and alpha-SMA. Promotes the growth of neurites. This is Gamma-adducin (ADD3) from Homo sapiens (Human).